The primary structure comprises 506 residues: NADH-quinone oxidoreductase subunit N (506 aa).

The next 14 membrane-spanning stretches (helical) occupy residues 14–34, 40–60, 72–92, 109–129, 131–151, 166–186, 209–229, 256–276, 286–306, 314–334, 343–363, 385–405, 420–440, and 465–485; these read MVPE…DLFF, YVAL…ITLY, FVLD…AALI, GEYY…ASSV, FVTL…LVGI, VING…LYGI, LLLA…IATV, MAGF…VSVQ, MSIY…VVAL, LFAY…VALS, FYML…HGLI, AIVM…AGFI, AHYV…VYYF, and IVMS…MIGY.

It belongs to the complex I subunit 2 family. NDH-1 is composed of 14 different subunits. Subunits NuoA, H, J, K, L, M, N constitute the membrane sector of the complex.

It localises to the cell membrane. It catalyses the reaction a quinone + NADH + 5 H(+)(in) = a quinol + NAD(+) + 4 H(+)(out). NDH-1 shuttles electrons from NADH, via FMN and iron-sulfur (Fe-S) centers, to quinones in the respiratory chain. The immediate electron acceptor for the enzyme in this species is believed to be a menaquinone. Couples the redox reaction to proton translocation (for every two electrons transferred, four hydrogen ions are translocated across the cytoplasmic membrane), and thus conserves the redox energy in a proton gradient. In Bacillus anthracis, this protein is NADH-quinone oxidoreductase subunit N.